Here is a 447-residue protein sequence, read N- to C-terminus: Sensor protein VanSB (447 aa).

2 consecutive transmembrane segments (helical) span residues 10–30 (VFSY…TLFA) and 137–155 (GIVM…AYIF). The 52-residue stretch at 157–208 (RQMTTPIKALADSANKMANLKEVPPPLERKDELGALAHDMHSMYIRLKETIA) folds into the HAMP domain. One can recognise a Histidine kinase domain in the interval 230-445 (AASHELKTPI…LFWLDLPPTS (216 aa)). His233 is modified (phosphohistidine; by autocatalysis).

The protein resides in the cell membrane. The catalysed reaction is ATP + protein L-histidine = ADP + protein N-phospho-L-histidine.. Functionally, member of the two-component regulatory system VanSB/VanRB. Activates the transcription of vanSB, vanYB and vanW in response to vancomycin which results in vancomycin resistance. VanSB may activate VanRB by phosphorylation. May also act as a phospho-VanRB phosphatase. The sequence is that of Sensor protein VanSB (vanSB) from Enterococcus faecalis (strain ATCC 700802 / V583).